A 556-amino-acid polypeptide reads, in one-letter code: GDP-Man:Man(3)GlcNAc(2)-PP-Dol alpha-1,2-mannosyltransferase (556 aa).

Residues methionine 1 to threonine 7 are Lumenal-facing. A helical transmembrane segment spans residues tyrosine 8–tryptophan 28. At arginine 29 to tyrosine 184 the chain is on the cytoplasmic side. Basic and acidic residues predominate over residues serine 64–threonine 79. Residues serine 64–threonine 86 form a disordered region. The helical intramembrane region spans phenylalanine 185–leucine 205. Topologically, residues valine 206–histidine 454 are cytoplasmic. The segment at residues phenylalanine 455–glycine 475 is an intramembrane region (helical). Residues glycine 476–glutamine 556 are Cytoplasmic-facing.

Belongs to the glycosyltransferase group 1 family. Glycosyltransferase 4 subfamily.

Its subcellular location is the endoplasmic reticulum membrane. It carries out the reaction an alpha-D-Man-(1-&gt;3)-[alpha-D-Man-(1-&gt;6)]-beta-D-Man-(1-&gt;4)-beta-D-GlcNAc-(1-&gt;4)-alpha-D-GlcNAc-diphospho-di-trans,poly-cis-dolichol + 2 GDP-alpha-D-mannose = an alpha-D-Man-(1-&gt;2)-alpha-D-Man-(1-&gt;2)-alpha-D-Man-(1-&gt;3)-[alpha-D-Man-(1-&gt;6)]-beta-D-Man-(1-&gt;4)-beta-D-GlcNAc-(1-&gt;4)-alpha-D-GlcNAc-diphospho-di-trans,poly-cis-dolichol + 2 GDP + 2 H(+). It participates in protein modification; protein glycosylation. Its function is as follows. GDP-Man:Man(3)GlcNAc(2)-PP-Dol alpha-1,2-mannosyltransferase that operates in the biosynthetic pathway of dolichol-linked oligosaccharides, the glycan precursors employed in protein asparagine (N)-glycosylation. The assembly of dolichol-linked oligosaccharides begins on the cytosolic side of the endoplasmic reticulum membrane and finishes in its lumen. The sequential addition of sugars to dolichol pyrophosphate produces dolichol-linked oligosaccharides containing fourteen sugars, including two GlcNAcs, nine mannoses and three glucoses. Once assembled, the oligosaccharide is transferred from the lipid to nascent proteins by oligosaccharyltransferases. Catalyzes, on the cytoplasmic face of the endoplasmic reticulum, the addition of the fourth and fifth mannose residues to the dolichol-linked oligosaccharide chain, to produce Man(5)GlcNAc(2)-PP-dolichol core oligosaccharide. The sequence is that of GDP-Man:Man(3)GlcNAc(2)-PP-Dol alpha-1,2-mannosyltransferase (alg-11) from Neurospora crassa (strain ATCC 24698 / 74-OR23-1A / CBS 708.71 / DSM 1257 / FGSC 987).